A 617-amino-acid chain; its full sequence is Chaperone protein HscA homolog (617 aa).

Belongs to the heat shock protein 70 family.

Its function is as follows. Chaperone involved in the maturation of iron-sulfur cluster-containing proteins. Has a low intrinsic ATPase activity which is markedly stimulated by HscB. The protein is Chaperone protein HscA homolog of Actinobacillus pleuropneumoniae serotype 5b (strain L20).